The following is a 247-amino-acid chain: MTILFLTMVISYFGCMKAAPMKEASVRGQGSLAYPGVRTHGTLESVSGPKAGSRGLTSLADTFEHVIEELLDEDQKVRPNEENNKDADLYTSRVMLSSQVPLEPPLLFLLEEYKNYLDAANMSMRVRRHSDPARRGELSVCDSISEWVTAADKKTAVDMSGGTVTVLEKVPVSKGQLKQYFYETKCNPMGYTKEGCRGIDKRHWNSQCRTTQSYVRALTMDSKKRIGWRFIRIDTSCVCTLTIKRGR.

A signal peptide spans 1–18; it reads MTILFLTMVISYFGCMKA. Residues 19-128 constitute a propeptide that is removed on maturation; sequence APMKEASVRG…AANMSMRVRR (110 aa). N-linked (GlcNAc...) asparagine glycosylation is present at N121. 3 disulfides stabilise this stretch: C141-C208, C186-C237, and C196-C239.

The protein belongs to the NGF-beta family. In terms of assembly, monomers and homodimers. Binds to NTRK2/TRKB. Can form heterodimers with other neurotrophin family members, such as NTF3 and NTF4 (in vitro), but the physiological relevance of this is not clear. BDNF precursor form: interacts with the heterodimer formed by NGFR and SORCS2. Mature BDNF has much lower affinity for the heterodimer formed by NGFR and SORCS2. N-glycosylated and glycosulfated, contrary to mature BDNF. In terms of processing, mature BDNF is produced by proteolytic removal of the propeptide, catalyzed by a FURIN family member. In addition, the precursor form is proteolytically cleaved within the propeptide, but this is not an obligatory intermediate for the production of mature BDNF. Can be converted into mature BDNF by plasmin (PLG).

It is found in the secreted. Important signaling molecule that activates signaling cascades downstream of NTRK2. During development, promotes the survival and differentiation of selected neuronal populations of the peripheral and central nervous systems. Participates in axonal growth, pathfinding and in the modulation of dendritic growth and morphology. Major regulator of synaptic transmission and plasticity at adult synapses in many regions of the CNS. The versatility of BDNF is emphasized by its contribution to a range of adaptive neuronal responses including long-term potentiation (LTP), long-term depression (LTD), certain forms of short-term synaptic plasticity, as well as homeostatic regulation of intrinsic neuronal excitability. This chain is Neurotrophic factor BDNF precursor form (BDNF), found in Canis lupus familiaris (Dog).